We begin with the raw amino-acid sequence, 264 residues long: TLC domain-containing protein 4-B (264 aa).

The next 6 helical transmembrane spans lie at 6–26 (VYVVAGSFVGFQLFFSCVSPV), 50–70 (LVSTVHALIVGLFCLYILWYD), 84–104 (LVKLNVAITCGYLFYDLLLLA), 110–130 (MGDVFFVCHHLAALYAYGYVL), 169–189 (LVVANGIAMAVVFFLVRIAVM), and 210–230 (LAIQVAWIISCVCLDILNIIW). A TLC domain is found at 41-243 (NKLNDWNSRL…IARGCYKVIT (203 aa)).

This sequence belongs to the TLCD4 family.

Its subcellular location is the membrane. This Danio rerio (Zebrafish) protein is TLC domain-containing protein 4-B (tlcd4b).